Reading from the N-terminus, the 303-residue chain is Taste receptor type 2 member 13 (303 aa).

The Extracellular portion of the chain corresponds to 1 to 7 (MESALPS). A helical membrane pass occupies residues 8–28 (IFTLVIIAEFIIGNLSNGFIV). At 29-55 (LINCIDWVSKRELSSVDKLLIILAISR) the chain is on the cytoplasmic side. The chain crosses the membrane as a helical span at residues 56-76 (IGLIWEILVSWFLALHSLAIF). Residues 77-85 (VSGTGLRIM) are Extracellular-facing. A helical membrane pass occupies residues 86–106 (IFSWIVSNHFNLWLATILSIF). Over 107 to 128 (YLLKIASFSSPAFLYLKRRVNK) the chain is Cytoplasmic. The helical transmembrane segment at 129 to 149 (VILMILLGTLVFLFLNLIQIN) threads the bilayer. Residues 150-184 (MLIKDWLDRYERNTTWNFSMSDFETFSVSVRFTMT) lie on the Extracellular side of the membrane. N162 and N166 each carry an N-linked (GlcNAc...) asparagine glycan. Residues 185-205 (MFSLTPFTVAFISFLLLVFSL) traverse the membrane as a helical segment. Over 206 to 232 (QKHLQKMQLNYKGHRDPRTKVHTNALK) the chain is Cytoplasmic. A helical transmembrane segment spans residues 233 to 253 (IVISFLLLYASFFLSILISWI). Residues 254–261 (SELYQNTV) are Extracellular-facing. A helical membrane pass occupies residues 262–282 (IYMLCETIGAFYPSSHSFLLI). Over 283 to 303 (LGNAKLRQAFLLVAAKVWAKR) the chain is Cytoplasmic.

It belongs to the G-protein coupled receptor T2R family.

The protein resides in the membrane. Receptor that may play a role in the perception of bitterness and is gustducin-linked. May play a role in sensing the chemical composition of the gastrointestinal content. The activity of this receptor may stimulate alpha gustducin, mediate PLC-beta-2 activation and lead to the gating of TRPM5. The sequence is that of Taste receptor type 2 member 13 (TAS2R13) from Pan troglodytes (Chimpanzee).